Here is a 319-residue protein sequence, read N- to C-terminus: Acetyl-coenzyme A carboxylase carboxyl transferase subunit beta (319 aa).

Residues 24 to 293 enclose the CoA carboxyltransferase N-terminal domain; it reads LWIKCPDTGQ…MIEQEPEPSA (270 aa). Residues 282 to 319 form a disordered region; the sequence is PEMIEQEPEPSAPVPPDEPDEPAATQEAPPAAPAAPPA.

The protein belongs to the AccD/PCCB family. As to quaternary structure, acetyl-CoA carboxylase is a heterohexamer composed of biotin carboxyl carrier protein (AccB), biotin carboxylase (AccC) and two subunits each of ACCase subunit alpha (AccA) and ACCase subunit beta (AccD).

Its subcellular location is the cytoplasm. The enzyme catalyses N(6)-carboxybiotinyl-L-lysyl-[protein] + acetyl-CoA = N(6)-biotinyl-L-lysyl-[protein] + malonyl-CoA. Its pathway is lipid metabolism; malonyl-CoA biosynthesis; malonyl-CoA from acetyl-CoA: step 1/1. Its function is as follows. Component of the acetyl coenzyme A carboxylase (ACC) complex. Biotin carboxylase (BC) catalyzes the carboxylation of biotin on its carrier protein (BCCP) and then the CO(2) group is transferred by the transcarboxylase to acetyl-CoA to form malonyl-CoA. The polypeptide is Acetyl-coenzyme A carboxylase carboxyl transferase subunit beta (Nitrobacter winogradskyi (strain ATCC 25391 / DSM 10237 / CIP 104748 / NCIMB 11846 / Nb-255)).